Reading from the N-terminus, the 218-residue chain is Ribosomal RNA small subunit methyltransferase J (218 aa).

Residues 55 to 56 (RD), 71 to 72 (ER), and aspartate 123 each bind S-adenosyl-L-methionine.

It belongs to the methyltransferase superfamily. RsmJ family.

The protein resides in the cytoplasm. The catalysed reaction is guanosine(1516) in 16S rRNA + S-adenosyl-L-methionine = N(2)-methylguanosine(1516) in 16S rRNA + S-adenosyl-L-homocysteine + H(+). Its function is as follows. Specifically methylates the guanosine in position 1516 of 16S rRNA. The sequence is that of Ribosomal RNA small subunit methyltransferase J from Rhodopseudomonas palustris (strain HaA2).